A 244-amino-acid polypeptide reads, in one-letter code: 5-oxoprolinase subunit A (244 aa).

The protein belongs to the LamB/PxpA family. Forms a complex composed of PxpA, PxpB and PxpC.

It catalyses the reaction 5-oxo-L-proline + ATP + 2 H2O = L-glutamate + ADP + phosphate + H(+). Functionally, catalyzes the cleavage of 5-oxoproline to form L-glutamate coupled to the hydrolysis of ATP to ADP and inorganic phosphate. This chain is 5-oxoprolinase subunit A, found in Salmonella typhimurium (strain LT2 / SGSC1412 / ATCC 700720).